The chain runs to 828 residues: Glycerol-3-phosphate acyltransferase 1, mitochondrial (828 aa).

The Cytoplasmic portion of the chain corresponds to 1–87; it reads MDESALTLGT…FFNPSIPSLG (87 aa). An important for mitochondrial localization region spans residues 80 to 120; sequence NPSIPSLGLRNVIYINETHTRHRGWLARRLSYVLFIQERDV. Residues 88-118 lie within the membrane without spanning it; sequence LRNVIYINETHTRHRGWLARRLSYVLFIQER. Topologically, residues 119 to 828 are cytoplasmic; sequence DVHKGMFATN…LEYILSFVVL (710 aa). The HXXXXD motif signature appears at 230–235; that stretch reads HRSHID. Positions 278, 279, 288, 293, and 328 each coordinate CoA. S380 bears the Phosphoserine mark. Residues 435-455 are disordered; that stretch reads SRPSDAADEGRDTSINESRNA. Residues 442-455 are compositionally biased toward basic and acidic residues; sequence DEGRDTSINESRNA. R462 contacts CoA. 2 positions are modified to phosphoserine: S688 and S695. An N6-acetyllysine mark is found at K780 and K784.

It belongs to the GPAT/DAPAT family.

Its subcellular location is the mitochondrion outer membrane. It catalyses the reaction sn-glycerol 3-phosphate + an acyl-CoA = a 1-acyl-sn-glycero-3-phosphate + CoA. The enzyme catalyses (9Z,12Z)-octadecadienoyl-CoA + sn-glycerol 3-phosphate = 1-(9Z,12Z)-octadecadienoyl-sn-glycero-3-phosphate + CoA. The catalysed reaction is sn-glycerol 3-phosphate + (9Z)-octadecenoyl-CoA = 1-(9Z-octadecenoyl)-sn-glycero-3-phosphate + CoA. It carries out the reaction sn-glycerol 3-phosphate + octadecanoyl-CoA = 1-octadecanoyl-sn-glycero-3-phosphate + CoA. It catalyses the reaction sn-glycerol 3-phosphate + hexadecanoyl-CoA = 1-hexadecanoyl-sn-glycero-3-phosphate + CoA. The enzyme catalyses dodecanoyl-CoA + sn-glycerol 3-phosphate = 1-dodecanoyl-sn-glycerol 3-phosphate + CoA. The catalysed reaction is 1-acyl-sn-glycero-3-phospho-(1'-sn-glycerol) + an acyl-CoA = a 1,2-diacyl-sn-glycero-3-phospho-(1'-sn-glycerol) + CoA. The protein operates within phospholipid metabolism; CDP-diacylglycerol biosynthesis; CDP-diacylglycerol from sn-glycerol 3-phosphate: step 1/3. Its function is as follows. Mitochondrial membrane protein that catalyzes the essential first step of biosynthesis of glycerolipids such as triglycerides, phosphatidic acids and lysophosphatidic acids. Esterifies acyl-group from acyl-coenzyme A (acyl-CoA) to the sn-1 position of glycerol-3-phosphate, to produce lysophosphatidic acid. Has a narrow hydrophobic binding cleft that selects for a linear acyl chain. Catalytic activity is higher for substrates with a 16-carbon acyl chain. This is Glycerol-3-phosphate acyltransferase 1, mitochondrial from Homo sapiens (Human).